The primary structure comprises 854 residues: Envelope glycoprotein gp160 (854 aa).

A signal peptide spans 1-31 (MKVMEKKKRDWNSLSIITIITIILLTPCLTS). The Extracellular segment spans residues 32-675 (ELWVTVYYGV…ITKWLWYIKI (644 aa)). Cystine bridges form between C53/C73, C118/C203, C125/C194, C130/C155, C216/C245, and C226/C237. The segment at 130–154 (CSKANFSQAKNLTNQTSSPPLEMKN) is V1. N-linked (GlcNAc...) asparagine; by host glycosylation is found at N134, N140, N143, N154, N158, N186, and N195. Residues 155 to 194 (CSFNVTTELRDKKKQVYSLFYVEDVVNLGNENNTYRIINC) are V2. N-linked (GlcNAc...) asparagine; by host glycosylation is found at N239, N260, N267, N274, N299, N331, N336, N351, and N356. Residues 294–327 (CHRPGNNTRGEVQIGPGMTFYNIENVVGDTRSAY) form a V3 region. A disulfide bridge links C294 with C328. Residues 362 to 372 (ASGGDPEVTHH) are CD4-binding loop. Disulfide bonds link C376–C429 and C383–C402. The tract at residues 383–402 (CNTSQIFTDNITNGIIILPC) is V4. 6 N-linked (GlcNAc...) asparagine; by host glycosylation sites follow: N384, N392, N426, N432, N446, and N450. V5 stretches follow at residues 445-456 (TNNSGNLTFRPT) and 447-456 (NSGNLTFRPT). Residues 501-522 (AAFGLGALFLGFLGAAGSTMGA) form a fusion peptide region. The segment at 564–582 (KQLQARLLAVERYLQDQQI) is immunosuppression. Cysteines 588 and 594 form a disulfide. Residues N601, N608, N616, and N628 are each glycosylated (N-linked (GlcNAc...) asparagine; by host). The stretch at 624-658 (KLVSNYTGKIFGLLEEAQSQQEKNERDLLELDQWA) forms a coiled coil. An MPER; binding to GalCer region spans residues 653–674 (ELDQWASLWNWFDITKWLWYIK). Residues 676 to 696 (FLMAVGGIIGLRIIMTVFSVV) traverse the membrane as a helical segment. The Cytoplasmic segment spans residues 697–854 (RRVRQGYSPL…IRQGLERALL (158 aa)). The YXXL motif; contains endocytosis signal signature appears at 703-706 (YSPL). A Di-leucine internalization motif motif is present at residues 853–854 (LL).

It belongs to the HIV-1 env protein family. As to quaternary structure, the mature envelope protein (Env) consists of a homotrimer of non-covalently associated gp120-gp41 heterodimers. The resulting complex protrudes from the virus surface as a spike. There seems to be as few as 10 spikes on the average virion. Interacts with host CD4, CCR5 and CXCR4. Gp120 also interacts with the C-type lectins CD209/DC-SIGN and CLEC4M/DC-SIGNR (collectively referred to as DC-SIGN(R)). Gp120 and gp41 interact with GalCer. Gp120 interacts with host ITGA4/ITGB7 complex; on CD4+ T-cells, this interaction results in rapid activation of integrin ITGAL/LFA-1, which facilitates efficient cell-to-cell spreading of HIV-1. Gp120 interacts with cell-associated heparan sulfate; this interaction increases virus infectivity on permissive cells and may be involved in infection of CD4- cells. The mature envelope protein (Env) consists of a homotrimer of non-covalently associated gp120-gp41 heterodimers. The resulting complex protrudes from the virus surface as a spike. There seems to be as few as 10 spikes on the average virion. In terms of processing, highly glycosylated by host. The high number of glycan on the protein is reffered to as 'glycan shield' because it contributes to hide protein sequence from adaptive immune system. Palmitoylation of the transmembrane protein and of Env polyprotein (prior to its proteolytic cleavage) is essential for their association with host cell membrane lipid rafts. Palmitoylation is therefore required for envelope trafficking to classical lipid rafts, but not for viral replication. Post-translationally, specific enzymatic cleavages in vivo yield mature proteins. Envelope glycoproteins are synthesized as an inactive precursor that is heavily N-glycosylated and processed likely by host cell furin in the Golgi to yield the mature SU and TM proteins. The cleavage site between SU and TM requires the minimal sequence [KR]-X-[KR]-R. About 2 of the 9 disulfide bonds of gp41 are reduced by P4HB/PDI, following binding to CD4 receptor.

The protein localises to the virion membrane. It is found in the host cell membrane. The protein resides in the host endosome membrane. Functionally, attaches the virus to the host lymphoid cell by binding to the primary receptor CD4. This interaction induces a structural rearrangement creating a high affinity binding site for a chemokine coreceptor like CXCR4 and/or CCR5. Acts as a ligand for CD209/DC-SIGN and CLEC4M/DC-SIGNR, which are respectively found on dendritic cells (DCs), and on endothelial cells of liver sinusoids and lymph node sinuses. These interactions allow capture of viral particles at mucosal surfaces by these cells and subsequent transmission to permissive cells. HIV subverts the migration properties of dendritic cells to gain access to CD4+ T-cells in lymph nodes. Virus transmission to permissive T-cells occurs either in trans (without DCs infection, through viral capture and transmission), or in cis (following DCs productive infection, through the usual CD4-gp120 interaction), thereby inducing a robust infection. In trans infection, bound virions remain infectious over days and it is proposed that they are not degraded, but protected in non-lysosomal acidic organelles within the DCs close to the cell membrane thus contributing to the viral infectious potential during DCs' migration from the periphery to the lymphoid tissues. On arrival at lymphoid tissues, intact virions recycle back to DCs' cell surface allowing virus transmission to CD4+ T-cells. Acts as a class I viral fusion protein. Under the current model, the protein has at least 3 conformational states: pre-fusion native state, pre-hairpin intermediate state, and post-fusion hairpin state. During fusion of viral and target intracellular membranes, the coiled coil regions (heptad repeats) assume a trimer-of-hairpins structure, positioning the fusion peptide in close proximity to the C-terminal region of the ectodomain. The formation of this structure appears to drive apposition and subsequent fusion of viral and target cell membranes. Complete fusion occurs in host cell endosomes and is dynamin-dependent, however some lipid transfer might occur at the plasma membrane. The virus undergoes clathrin-dependent internalization long before endosomal fusion, thus minimizing the surface exposure of conserved viral epitopes during fusion and reducing the efficacy of inhibitors targeting these epitopes. Membranes fusion leads to delivery of the nucleocapsid into the cytoplasm. Its function is as follows. Oligomerizes in the host endoplasmic reticulum into predominantly trimers. In a second time, gp160 transits in the host Golgi, where glycosylation is completed. The precursor is then proteolytically cleaved in the trans-Golgi and thereby activated by cellular furin or furin-like proteases to produce gp120 and gp41. The protein is Envelope glycoprotein gp160 of Pan (chimpanzees).